A 93-amino-acid polypeptide reads, in one-letter code: Cobalt transport protein CbiN (93 aa).

2 helical membrane passes run leucine 5–glycine 25 and leucine 63–cysteine 83.

It belongs to the CbiN family. As to quaternary structure, forms an energy-coupling factor (ECF) transporter complex composed of an ATP-binding protein (A component, CbiO), a transmembrane protein (T component, CbiQ) and 2 possible substrate-capture proteins (S components, CbiM and CbiN) of unknown stoichimetry.

It localises to the cell inner membrane. Its pathway is cofactor biosynthesis; adenosylcobalamin biosynthesis. Its function is as follows. Part of the energy-coupling factor (ECF) transporter complex CbiMNOQ involved in cobalt import. The chain is Cobalt transport protein CbiN from Salmonella newport (strain SL254).